A 371-amino-acid chain; its full sequence is GTPase Obg (371 aa).

One can recognise an Obg domain in the interval 1-159 (MKFVDEAYID…KNLKLELKVL (159 aa)). The region spanning 160-334 (ADVGLLGMPN…LIRTIYKHVH (175 aa)) is the OBG-type G domain. GTP-binding positions include 166–173 (GMPNAGKS), 191–195 (FTTLH), 213–216 (DIPG), 284–287 (NKLD), and 315–317 (SAL). Mg(2+) is bound by residues Ser173 and Thr193.

This sequence belongs to the TRAFAC class OBG-HflX-like GTPase superfamily. OBG GTPase family. As to quaternary structure, monomer. Requires Mg(2+) as cofactor.

Its subcellular location is the cytoplasm. In terms of biological role, an essential GTPase which binds GTP, GDP and possibly (p)ppGpp with moderate affinity, with high nucleotide exchange rates and a fairly low GTP hydrolysis rate. Plays a role in control of the cell cycle, stress response, ribosome biogenesis and in those bacteria that undergo differentiation, in morphogenesis control. The sequence is that of GTPase Obg from Delftia acidovorans (strain DSM 14801 / SPH-1).